Here is a 459-residue protein sequence, read N- to C-terminus: N,N-dimethyl phenylurea N-demethylase subunit alpha (459 aa).

One can recognise a Rieske domain in the interval 55–166 (WVFVAHETEI…VESYHGFIFT (112 aa)). Residues cysteine 97, histidine 99, cysteine 117, and histidine 120 each contribute to the [2Fe-2S] cluster site. Residues histidine 225, histidine 230, and aspartate 386 each contribute to the Fe cation site.

This sequence belongs to the bacterial ring-hydroxylating dioxygenase alpha subunit family. As to quaternary structure, pdmA (subunit alpha) and PdmB (subunit beta) form the oxygenase component of a bacterial Rieske non-heme iron oxygenase (RO) system. [2Fe-2S] cluster is required as a cofactor. The cofactor is Fe cation.

It carries out the reaction a 1,1-dimethyl-3-phenylurea + 2 reduced [2Fe-2S]-[ferredoxin] + O2 + 2 H(+) = a 1-methyl-3-phenylurea + formaldehyde + 2 oxidized [2Fe-2S]-[ferredoxin] + H2O. The catalysed reaction is isoproturon + 2 reduced [2Fe-2S]-[ferredoxin] + O2 + 2 H(+) = 1-methyl-3-[4-(propan-2-yl)phenyl]urea + formaldehyde + 2 oxidized [2Fe-2S]-[ferredoxin] + H2O. It catalyses the reaction chlorotoluron + 2 reduced [2Fe-2S]-[ferredoxin] + O2 + 2 H(+) = 3-(3-chloro-4-methylphenyl)-1-methylurea + formaldehyde + 2 oxidized [2Fe-2S]-[ferredoxin] + H2O. The enzyme catalyses metoxuron + 2 reduced [2Fe-2S]-[ferredoxin] + O2 + 2 H(+) = 3-(3-chloro-4-methoxylphenyl)-1-methylurea + formaldehyde + 2 oxidized [2Fe-2S]-[ferredoxin] + H2O. It carries out the reaction monuron + 2 reduced [2Fe-2S]-[ferredoxin] + O2 + 2 H(+) = 3-(4-chlorophenyl)-1-methylurea + formaldehyde + 2 oxidized [2Fe-2S]-[ferredoxin] + H2O. The catalysed reaction is diuron + 2 reduced [2Fe-2S]-[ferredoxin] + O2 + 2 H(+) = 3-(3,4-dichlorophenyl)-1-methylurea + formaldehyde + 2 oxidized [2Fe-2S]-[ferredoxin] + H2O. It catalyses the reaction fluometuron + 2 reduced [2Fe-2S]-[ferredoxin] + O2 + 2 H(+) = 3-[3-(trifluoromethyl)phenyl]-1-methylurea + formaldehyde + 2 oxidized [2Fe-2S]-[ferredoxin] + H2O. The enzyme catalyses fenuron + 2 reduced [2Fe-2S]-[ferredoxin] + O2 + 2 H(+) = 1-methyl-3-phenylurea + formaldehyde + 2 oxidized [2Fe-2S]-[ferredoxin] + H2O. It participates in xenobiotic degradation. Activity is stimulated in vitro by coexpression of a [3Fe-4S]-type ferredoxin. In terms of biological role, part of the multicomponent N,N-dimethyl phenylurea N-demethylase responsible for the initial N-demethylation step during the bacterial metabolism of N,N-dimethyl-substituted phenylurea herbicides. Catalyzes the mono-N-demethylation of N,N-dimethyl-substituted phenylurea herbicides to their mono-N-demethylated derivatives. Is active on isoproturon (IPU), chlorotoluron, metoxuron, monoron, diuron, fluometuron and fenuron, but cannot transform the N-methoxy-N-methyl-substituted herbicides. The polypeptide is N,N-dimethyl phenylurea N-demethylase subunit alpha (Sphingobium sp. (strain YBL2)).